The primary structure comprises 292 residues: 4-hydroxy-tetrahydrodipicolinate synthase (292 aa).

T45 contacts pyruvate. Y133 functions as the Proton donor/acceptor in the catalytic mechanism. K161 acts as the Schiff-base intermediate with substrate in catalysis. Pyruvate is bound at residue I203.

The protein belongs to the DapA family. Homotetramer; dimer of dimers.

It localises to the cytoplasm. It carries out the reaction L-aspartate 4-semialdehyde + pyruvate = (2S,4S)-4-hydroxy-2,3,4,5-tetrahydrodipicolinate + H2O + H(+). It functions in the pathway amino-acid biosynthesis; L-lysine biosynthesis via DAP pathway; (S)-tetrahydrodipicolinate from L-aspartate: step 3/4. Its function is as follows. Catalyzes the condensation of (S)-aspartate-beta-semialdehyde [(S)-ASA] and pyruvate to 4-hydroxy-tetrahydrodipicolinate (HTPA). This Shigella dysenteriae serotype 1 (strain Sd197) protein is 4-hydroxy-tetrahydrodipicolinate synthase.